The sequence spans 198 residues: MASGPSVFLLNVSGQIESAEFPEFDDLYCKYSFVYGHDWAPTSGIEEGISQITSKSQGGKQTLVWNFPVEITFKSTNPYGWPQIVISVYGPDVFGNDVVRGYGAVHLPFTPGRHTRTIPMFVPESSSRLQRFTSWFMGRRPEFTDPKVVAQGEGREVTRVRSQGCVTVSFNVVTKDLKKLGYNTGSSDFPSAQLMPQP.

The C2 B9-type domain occupies 8–126 (FLLNVSGQIE…TIPMFVPESS (119 aa)).

It belongs to the B9D family. Part of the tectonic-like complex (also named B9 complex).

It is found in the cytoplasm. The protein localises to the cytoskeleton. Its subcellular location is the cilium basal body. In terms of biological role, component of the tectonic-like complex, a complex localized at the transition zone of primary cilia and acting as a barrier that prevents diffusion of transmembrane proteins between the cilia and plasma membranes. Required for ciliogenesis and sonic hedgehog/SHH signaling. This chain is B9 domain-containing protein 1 (b9d1), found in Xenopus laevis (African clawed frog).